The following is a 359-amino-acid chain: Dual-specificity RNA methyltransferase RlmN (359 aa).

E102 acts as the Proton acceptor in catalysis. Residues 108-351 (EKKRATLCIS…IRKNRGSDIQ (244 aa)) form the Radical SAM core domain. C115 and C354 are joined by a disulfide. [4Fe-4S] cluster contacts are provided by C122, C126, and C129. Residues 178-179 (GE), S210, 232-234 (SLH), and N311 contribute to the S-adenosyl-L-methionine site. C354 functions as the S-methylcysteine intermediate in the catalytic mechanism.

It belongs to the radical SAM superfamily. RlmN family. The cofactor is [4Fe-4S] cluster.

It is found in the cytoplasm. The catalysed reaction is adenosine(2503) in 23S rRNA + 2 reduced [2Fe-2S]-[ferredoxin] + 2 S-adenosyl-L-methionine = 2-methyladenosine(2503) in 23S rRNA + 5'-deoxyadenosine + L-methionine + 2 oxidized [2Fe-2S]-[ferredoxin] + S-adenosyl-L-homocysteine. It catalyses the reaction adenosine(37) in tRNA + 2 reduced [2Fe-2S]-[ferredoxin] + 2 S-adenosyl-L-methionine = 2-methyladenosine(37) in tRNA + 5'-deoxyadenosine + L-methionine + 2 oxidized [2Fe-2S]-[ferredoxin] + S-adenosyl-L-homocysteine. In terms of biological role, specifically methylates position 2 of adenine 2503 in 23S rRNA and position 2 of adenine 37 in tRNAs. m2A2503 modification seems to play a crucial role in the proofreading step occurring at the peptidyl transferase center and thus would serve to optimize ribosomal fidelity. This Buchnera aphidicola subsp. Cinara cedri (strain Cc) protein is Dual-specificity RNA methyltransferase RlmN.